The sequence spans 205 residues: Methylthioribulose-1-phosphate dehydratase (205 aa).

Zn(2+) contacts are provided by H96 and H98.

This sequence belongs to the aldolase class II family. MtnB subfamily. Requires Zn(2+) as cofactor.

The catalysed reaction is 5-(methylsulfanyl)-D-ribulose 1-phosphate = 5-methylsulfanyl-2,3-dioxopentyl phosphate + H2O. Its pathway is amino-acid biosynthesis; L-methionine biosynthesis via salvage pathway; L-methionine from S-methyl-5-thio-alpha-D-ribose 1-phosphate: step 2/6. Catalyzes the dehydration of methylthioribulose-1-phosphate (MTRu-1-P) into 2,3-diketo-5-methylthiopentyl-1-phosphate (DK-MTP-1-P). In Pseudomonas aeruginosa (strain LESB58), this protein is Methylthioribulose-1-phosphate dehydratase.